The sequence spans 568 residues: Protein KATNIP homolog (568 aa).

Residues 1–20 (MSDSDLKEIEKNAENIKLEP) are compositionally biased toward basic and acidic residues. Positions 1–30 (MSDSDLKEIEKNAENIKLEPAEDEVNEEDQ) are disordered. A compositionally biased stretch (acidic residues) spans 21-30 (AEDEVNEEDQ).

As to expression, expressed in most ciliated neuronal cells. Not expressed in non-ciliated cells.

It is found in the cytoplasm. The protein resides in the cytoskeleton. Its subcellular location is the cilium axoneme. The protein localises to the cilium basal body. In terms of biological role, may regulate ciliary A-tubule number and, along with arl-13, controls cilium integrity. The chain is Protein KATNIP homolog from Caenorhabditis elegans.